Here is a 208-residue protein sequence, read N- to C-terminus: Thymidylate kinase (208 aa).

10–17 (GGEGAGKS) is an ATP binding site.

Belongs to the thymidylate kinase family.

The enzyme catalyses dTMP + ATP = dTDP + ADP. Functionally, phosphorylation of dTMP to form dTDP in both de novo and salvage pathways of dTTP synthesis. This Alcanivorax borkumensis (strain ATCC 700651 / DSM 11573 / NCIMB 13689 / SK2) protein is Thymidylate kinase.